A 952-amino-acid chain; its full sequence is MKPEWKNNDFIRVKGARENNLKNINIDIPKNQFVVITGLSGSGKSSLAFNTIYAEGRRRYLESLSSYARQFLGNSDKPDVDLIEGLSPAISIDQKTTSHNPRSTMGTVTEIYDYLRLLWARIGTPYCPNGHGSIQTQTINQIANQIFDLPNKSKVQLLAPTVKNQRGIFTNEFIKYKQLGFLRVLVDGQIYTLDDEIKLDKNTKHNISVVIDRIIINKDNQTYSRIVDSIETIDRLTNGKIEVLKEDGTILNFSKNHGCDKCGFSISELEPRLFSFNSPLGSCSYCKGLGFSYEPDVDKIIADSKLSINQGAIDIFKNIVHGTSLDWQRFLSLVNHYKIPLDKPIEQLDKSQLNLILEGSDEPIEIKTISNSGAKNIRFEHYEGIANLIKRRHLETNSQVSREWYSAYMSEITCKKCHGKKLIKDALSVKLGGIDIISFTELSIDKSIDFLLKLELNDEQKKIGELALKEIINRLSFLKNVGLDYLNLARRASTLSGGEAQRIRLATQIGSQLTGVLYVMDEPSIGLHQKDNMRLIKTMMVMRDLGNTLLVVEHDSETMLAADYLIDIGPKAGNEGGELVACGTPLQVMENSNSITGQYLSGKKQISIPKNRHSGNGKTIIIKGAKVNNLKNINVTIPLNKLVLITGVSGSGKSSLINQTLVPALERILYRKGVKKDTYKEIIGANNIDKIIVVSQDPIGRTPRSNPATYISVFDDIRDLFANTKEAKARGYTNSRFSFNVPGGRCDKCFGDGVIRIEMHFLPDVYVKCEVCNGKKYNSQTLEIKYLGKSIFDVLQMSCKEAYEFFKAIPNISRKLRLLCDVGLEYLQLGINVTFLSGGEAQRIKLSKFLQKKSTGKTLFVLDEPSTGLHLEDINKLLTIIQRIIKNGDTVVVIEHNLDIIKVADYIIDLGPEGGDNGGQIVAQGTPEQLINQVNKSYTAQYLSKILKPDSI.

38 to 45 serves as a coordination point for ATP; it reads GLSGSGKS. The C4-type zinc finger occupies 259–286; that stretch reads CDKCGFSISELEPRLFSFNSPLGSCSYC. ABC transporter domains are found at residues 316-595 and 615-944; these read FKNI…SNSI and GNGK…QYLS. An ATP-binding site is contributed by 647–654; it reads GVSGSGKS. Residues 746–772 form a C4-type zinc finger; the sequence is CDKCFGDGVIRIEMHFLPDVYVKCEVC.

The protein belongs to the ABC transporter superfamily. UvrA family. As to quaternary structure, forms a heterotetramer with UvrB during the search for lesions.

It is found in the cytoplasm. Its function is as follows. The UvrABC repair system catalyzes the recognition and processing of DNA lesions. UvrA is an ATPase and a DNA-binding protein. A damage recognition complex composed of 2 UvrA and 2 UvrB subunits scans DNA for abnormalities. When the presence of a lesion has been verified by UvrB, the UvrA molecules dissociate. The chain is UvrABC system protein A from Mycoplasma genitalium (strain ATCC 33530 / DSM 19775 / NCTC 10195 / G37) (Mycoplasmoides genitalium).